The sequence spans 375 residues: UDP-N-acetylglucosamine--N-acetylmuramyl-(pentapeptide) pyrophosphoryl-undecaprenol N-acetylglucosamine transferase (375 aa).

Residues 13–15 (TGG), Asn124, Arg165, Ser193, and Gln294 contribute to the UDP-N-acetyl-alpha-D-glucosamine site.

Belongs to the glycosyltransferase 28 family. MurG subfamily.

It localises to the cell inner membrane. The catalysed reaction is di-trans,octa-cis-undecaprenyl diphospho-N-acetyl-alpha-D-muramoyl-L-alanyl-D-glutamyl-meso-2,6-diaminopimeloyl-D-alanyl-D-alanine + UDP-N-acetyl-alpha-D-glucosamine = di-trans,octa-cis-undecaprenyl diphospho-[N-acetyl-alpha-D-glucosaminyl-(1-&gt;4)]-N-acetyl-alpha-D-muramoyl-L-alanyl-D-glutamyl-meso-2,6-diaminopimeloyl-D-alanyl-D-alanine + UDP + H(+). It functions in the pathway cell wall biogenesis; peptidoglycan biosynthesis. Cell wall formation. Catalyzes the transfer of a GlcNAc subunit on undecaprenyl-pyrophosphoryl-MurNAc-pentapeptide (lipid intermediate I) to form undecaprenyl-pyrophosphoryl-MurNAc-(pentapeptide)GlcNAc (lipid intermediate II). The sequence is that of UDP-N-acetylglucosamine--N-acetylmuramyl-(pentapeptide) pyrophosphoryl-undecaprenol N-acetylglucosamine transferase from Mesorhizobium japonicum (strain LMG 29417 / CECT 9101 / MAFF 303099) (Mesorhizobium loti (strain MAFF 303099)).